The primary structure comprises 192 residues: Natural cytotoxicity triggering receptor 3 (192 aa).

The signal sequence occupies residues 1 to 18 (MAKVLLIVFIMVYAGSCA). One can recognise an Ig-like domain in the interval 19–126 (IWVSQPPEIR…VGTGNGTRLV (108 aa)). At 19 to 147 (IWVSQPPEIR…AEPERAAYTS (129 aa)) the chain is on the extracellular side. A disulfide bridge connects residues Cys39 and Cys108. Residues Asn42 and Asn121 are each glycosylated (N-linked (GlcNAc...) asparagine). A helical transmembrane segment spans residues 148-168 (LLLRAGVYALSFLSVATGSVI). The Cytoplasmic segment spans residues 169-192 (YYQGKCLCHVGNTATPPTASEERF).

This sequence belongs to the natural cytotoxicity receptor (NCR) family. As to quaternary structure, homodimer in the unliganted form. Interacts with CD3Z. Interacts with and is activated by binding to NCR3LG1. Interacts with and is activated by binding to BAG6. Interacts with and is inhibited by binding to LGALS3.

It is found in the cell membrane. In terms of biological role, cell membrane receptor of natural killer/NK cells that is activated by binding of extracellular ligands including BAG6 and NCR3LG1. Stimulates NK cells cytotoxicity toward neighboring cells producing these ligands. It controls, for instance, NK cells cytotoxicity against tumor cells. Engagement of NCR3 by BAG6 also promotes myeloid dendritic cells (DC) maturation, both through killing DCs that did not acquire a mature phenotype, and inducing the release by NK cells of TNFA and IFNG that promote DC maturation. The chain is Natural cytotoxicity triggering receptor 3 (Ncr3) from Rattus norvegicus (Rat).